The sequence spans 363 residues: 3-isopropylmalate dehydrogenase (363 aa).

77-90 (GPKWQHLPPDQQPE) contacts NAD(+). Arg98, Arg108, Arg137, and Asp226 together coordinate substrate. Mg(2+)-binding residues include Asp226, Asp250, and Asp254. 284–296 (GSAPDIAGKNIAN) contributes to the NAD(+) binding site.

The protein belongs to the isocitrate and isopropylmalate dehydrogenases family. LeuB type 1 subfamily. In terms of assembly, homodimer. Mg(2+) serves as cofactor. Mn(2+) is required as a cofactor.

The protein localises to the cytoplasm. It catalyses the reaction (2R,3S)-3-isopropylmalate + NAD(+) = 4-methyl-2-oxopentanoate + CO2 + NADH. Its pathway is amino-acid biosynthesis; L-leucine biosynthesis; L-leucine from 3-methyl-2-oxobutanoate: step 3/4. In terms of biological role, catalyzes the oxidation of 3-carboxy-2-hydroxy-4-methylpentanoate (3-isopropylmalate) to 3-carboxy-4-methyl-2-oxopentanoate. The product decarboxylates to 4-methyl-2 oxopentanoate. This chain is 3-isopropylmalate dehydrogenase, found in Buchnera aphidicola subsp. Pemphigus spyrothecae.